The sequence spans 362 residues: C-C chemokine receptor type 10 (362 aa).

Residues 1 to 48 (MGTKPTEQVSWGLYSGYDEEAYSVGPLPELCYKADVQAFSRAFQPSVS) are Extracellular-facing. Residues 49–69 (LMVAVLGLAGNGLVLATHLAA) traverse the membrane as a helical segment. The Cytoplasmic portion of the chain corresponds to 70-80 (RRTTRSPTSVH). Residues 81–101 (LLQLALADLLLALTLPFAAAG) form a helical membrane-spanning segment. The Extracellular portion of the chain corresponds to 102 to 115 (ALQGWNLGSTTCRA). Residues cysteine 113 and cysteine 191 are joined by a disulfide bond. The chain crosses the membrane as a helical span at residues 116–136 (ISGLYSASFHAGFLFLACISA). The Cytoplasmic portion of the chain corresponds to 137-159 (DRYVAIARALPAGQRPSTPSRAH). The helical transmembrane segment at 160-180 (LVSVFVWLLSLFLALPALLFS) threads the bilayer. Residues 181 to 208 (RDGPREGQRRCRLIFPESLTQTVKGASA) are Extracellular-facing. Residues 209–229 (VAQVVLGFALPLGVMAACYAL) traverse the membrane as a helical segment. At 230–247 (LGRTLLAARGPERRRALR) the chain is on the cytoplasmic side. A helical membrane pass occupies residues 248-268 (VVVALVVAFVVLQLPYSLALL). Residues 269–291 (LDTADLLAARERSCSSSKRKDLA) lie on the Extracellular side of the membrane. The helical transmembrane segment at 292–312 (LLVTGGLTLVRCSLNPVLYAF) threads the bilayer. At 313-362 (LGLRFRRDLRRLLQGGGCSPKPNPRGRCPRRLRLSSCSAPTETHSLSWDN) the chain is on the cytoplasmic side.

This sequence belongs to the G-protein coupled receptor 1 family. Expressed at high levels in small intestine, colon, lymph nodes, Peyer patches and at lower levels in thymus, lung and spleen.

The protein localises to the cell membrane. Functionally, receptor for chemokines SCYA27 and SCYA28. Subsequently transduces a signal by increasing the intracellular calcium ions level. This is C-C chemokine receptor type 10 (Ccr10) from Mus musculus (Mouse).